Here is a 229-residue protein sequence, read N- to C-terminus: Ribonuclease HII (229 aa).

The RNase H type-2 domain occupies 42–229 (TRIAGVDEVG…KPVHKILYQE (188 aa)). Positions 48, 49, and 139 each coordinate a divalent metal cation.

It belongs to the RNase HII family. It depends on Mn(2+) as a cofactor. Mg(2+) is required as a cofactor.

The protein localises to the cytoplasm. The enzyme catalyses Endonucleolytic cleavage to 5'-phosphomonoester.. Endonuclease that specifically degrades the RNA of RNA-DNA hybrids. The sequence is that of Ribonuclease HII from Ruegeria sp. (strain TM1040) (Silicibacter sp.).